A 298-amino-acid polypeptide reads, in one-letter code: UDP-3-O-acyl-N-acetylglucosamine deacetylase (298 aa).

Zn(2+)-binding residues include histidine 75, histidine 232, and aspartate 236. Histidine 259 acts as the Proton donor in catalysis.

Belongs to the LpxC family. Requires Zn(2+) as cofactor.

It catalyses the reaction a UDP-3-O-[(3R)-3-hydroxyacyl]-N-acetyl-alpha-D-glucosamine + H2O = a UDP-3-O-[(3R)-3-hydroxyacyl]-alpha-D-glucosamine + acetate. The protein operates within glycolipid biosynthesis; lipid IV(A) biosynthesis; lipid IV(A) from (3R)-3-hydroxytetradecanoyl-[acyl-carrier-protein] and UDP-N-acetyl-alpha-D-glucosamine: step 2/6. Functionally, catalyzes the hydrolysis of UDP-3-O-myristoyl-N-acetylglucosamine to form UDP-3-O-myristoylglucosamine and acetate, the committed step in lipid A biosynthesis. This chain is UDP-3-O-acyl-N-acetylglucosamine deacetylase, found in Wolinella succinogenes (strain ATCC 29543 / DSM 1740 / CCUG 13145 / JCM 31913 / LMG 7466 / NCTC 11488 / FDC 602W) (Vibrio succinogenes).